The primary structure comprises 123 residues: Small ribosomal subunit protein uS12cz/uS12cy (123 aa).

This sequence belongs to the universal ribosomal protein uS12 family. As to quaternary structure, part of the 30S ribosomal subunit.

The protein resides in the plastid. Its subcellular location is the chloroplast. In terms of biological role, with S4 and S5 plays an important role in translational accuracy. Located at the interface of the 30S and 50S subunits. In Citrus sinensis (Sweet orange), this protein is Small ribosomal subunit protein uS12cz/uS12cy (rps12-A).